The chain runs to 335 residues: Nucleoid-associated protein YejK (335 aa).

It belongs to the YejK family.

Its subcellular location is the cytoplasm. It localises to the nucleoid. The chain is Nucleoid-associated protein YejK from Salmonella schwarzengrund (strain CVM19633).